A 197-amino-acid polypeptide reads, in one-letter code: Adrenodoxin-like protein 2, mitochondrial (197 aa).

A mitochondrion-targeting transit peptide spans 1-74 (MVFHRLSRLG…TSFSTTSEKG (74 aa)). The 104-residue stretch at 81–184 (INVTFVDKDG…GVRLAIPSAT (104 aa)) folds into the 2Fe-2S ferredoxin-type domain. [2Fe-2S] cluster-binding residues include Cys118, Cys124, Cys127, and Cys165.

It belongs to the adrenodoxin/putidaredoxin family. It depends on [2Fe-2S] cluster as a cofactor.

Its subcellular location is the mitochondrion. Associates with the adrenodoxin reductase MFDR to form an efficient low potential electron transfer chain that is able to reduce cytochrome C. In Arabidopsis thaliana (Mouse-ear cress), this protein is Adrenodoxin-like protein 2, mitochondrial.